The chain runs to 268 residues: Energy-coupling factor transporter transmembrane protein EcfT (268 aa).

The next 5 helical transmembrane spans lie at 26-46 (IVTFVYIIVMLWASNWQTYAW), 72-92 (IFWLILFTVILQLLFTPGTPI), 106-126 (ILNAIYVMVRFVLIILMSTIL), 149-169 (IGVPVAELALMLAIALRFVPL), and 247-267 (VAFAALIGFVIIFFVIKTWLH).

Belongs to the energy-coupling factor EcfT family. Forms a stable energy-coupling factor (ECF) transporter complex composed of 2 membrane-embedded substrate-binding proteins (S component), 2 ATP-binding proteins (A component) and 2 transmembrane proteins (T component). May be able to interact with more than 1 S component at a time.

The protein localises to the cell membrane. Its function is as follows. Transmembrane (T) component of an energy-coupling factor (ECF) ABC-transporter complex. Unlike classic ABC transporters this ECF transporter provides the energy necessary to transport a number of different substrates. This Leuconostoc gelidum subsp. gasicomitatum (strain DSM 15947 / CCUG 46042 / CECT 5767 / JCM 12535 / LMG 18811 / NBRC 113245 / TB1-10) (Leuconostoc gasicomitatum) protein is Energy-coupling factor transporter transmembrane protein EcfT.